Reading from the N-terminus, the 172-residue chain is Protein GrpE (172 aa).

It belongs to the GrpE family. Homodimer.

Its subcellular location is the cytoplasm. Functionally, participates actively in the response to hyperosmotic and heat shock by preventing the aggregation of stress-denatured proteins, in association with DnaK and GrpE. It is the nucleotide exchange factor for DnaK and may function as a thermosensor. Unfolded proteins bind initially to DnaJ; upon interaction with the DnaJ-bound protein, DnaK hydrolyzes its bound ATP, resulting in the formation of a stable complex. GrpE releases ADP from DnaK; ATP binding to DnaK triggers the release of the substrate protein, thus completing the reaction cycle. Several rounds of ATP-dependent interactions between DnaJ, DnaK and GrpE are required for fully efficient folding. The protein is Protein GrpE of Thermotoga maritima (strain ATCC 43589 / DSM 3109 / JCM 10099 / NBRC 100826 / MSB8).